Reading from the N-terminus, the 135-residue chain is Small ribosomal subunit protein bS16 (135 aa).

The segment at 94–135 is disordered; that stretch reads IGTEMETWQQRNDSRLKRGLDRKAIRRKRKKEAEAKEKESAG. Composition is skewed to basic and acidic residues over residues 105–116 and 124–135; these read NDSRLKRGLDRK and KEAEAKEKESAG.

The protein belongs to the bacterial ribosomal protein bS16 family.

The sequence is that of Small ribosomal subunit protein bS16 from Chloroherpeton thalassium (strain ATCC 35110 / GB-78).